Consider the following 30-residue polypeptide: LIM and SH3 domain protein 1 (30 aa).

Position 1 is an N-acetylmethionine (Met1). The region spanning Cys5–Phe30 is the LIM zinc-binding domain.

Interacts with F-actin. Interacts with ANKRD54. Interacts with KBTBD10. Post-translationally, phosphorylated.

The protein localises to the cytoplasm. The protein resides in the cell cortex. Its subcellular location is the cytoskeleton. Plays an important role in the regulation of dynamic actin-based, cytoskeletal activities. Agonist-dependent changes in LASP1 phosphorylation may also serve to regulate actin-associated ion transport activities, not only in the parietal cell but also in certain other F-actin-rich secretory epithelial cell types. The polypeptide is LIM and SH3 domain protein 1 (LASP1) (Sus scrofa (Pig)).